The sequence spans 133 residues: ATP synthase epsilon chain, chloroplastic (133 aa).

Belongs to the ATPase epsilon chain family. In terms of assembly, F-type ATPases have 2 components, CF(1) - the catalytic core - and CF(0) - the membrane proton channel. CF(1) has five subunits: alpha(3), beta(3), gamma(1), delta(1), epsilon(1). CF(0) has three main subunits: a, b and c.

Its subcellular location is the plastid. It is found in the chloroplast thylakoid membrane. In terms of biological role, produces ATP from ADP in the presence of a proton gradient across the membrane. In Nicotiana sylvestris (Wood tobacco), this protein is ATP synthase epsilon chain, chloroplastic.